A 566-amino-acid polypeptide reads, in one-letter code: Chondroitin sulfate proteoglycan 5 (566 aa).

The first 30 residues, 1–30 (MGRAGGGGPDWGPPPVLLLLGVTLVLTAGA), serve as a signal peptide directing secretion. At 31–423 (VPARETGSAI…SIITDFQVMC (393 aa)) the chain is on the extracellular side. O-linked (Xyl...) (chondroitin sulfate) serine glycosylation occurs at Ser38. Residues 56–93 (ANDTREEAGLPAAGEDETSWTERGSEMAAVGPGVGPEE) are disordered. Residue Asn57 is glycosylated (N-linked (GlcNAc...) asparagine). A glycan (O-linked (GalNAc...) threonine) is linked at Thr76. A glycan (O-linked (Xyl...) (chondroitin sulfate) serine) is linked at Ser123. Thr132 carries an O-linked (GalNAc...) threonine glycan. 3 disordered regions span residues 137–173 (DEAL…GPEL), 218–249 (DSEG…TPSW), and 263–327 (ESDF…PPQH). O-linked (GalNAc...) serine glycosylation occurs at Ser143. O-linked (GalNAc...) threonine glycosylation is found at Thr144, Thr153, and Thr155. O-linked (GalNAc...) serine glycosylation is found at Ser156 and Ser160. A compositionally biased stretch (basic and acidic residues) spans 163–173 (VHDKPSVGPEL). Residue Thr235 is glycosylated (O-linked (GalNAc...) threonine). The interaction with TNC and TNR stretch occupies residues 265-301 (DFYPTTSFYDDLEEEEEEEEDKDTVGGGDLEDENDLL). Positions 274–286 (DDLEEEEEEEEDK) are enriched in acidic residues. 2 N-linked (GlcNAc...) asparagine glycosylation sites follow: Asn355 and Asn367. Positions 371–413 (RSVCDLFPSYCHNGGQCYLVENIGAFCRCNTQDYIWHKGMRCE) constitute an EGF-like domain. Intrachain disulfides connect Cys374/Cys387, Cys381/Cys397, and Cys399/Cys412. Phosphoserine is present on residues Gly394 and Phe396. Position 397 is a phosphothreonine (Cys397). The chain crosses the membrane as a helical span at residues 424-444 (VAVGSAALVLLLLFMMTVFFA). An interaction with GOPC region spans residues 442-460 (FFAKKLYLLKTENTKLRRT). Topologically, residues 445–566 (KKLYLLKTEN…GVNCLQNNLT (122 aa)) are cytoplasmic. Ser467, Ser475, and Ser477 each carry phosphoserine. Thr478 is modified (phosphothreonine). A phosphoserine mark is found at Ser483 and Ser543. The disordered stretch occupies residues 531-566 (KEEESFNIQNSMSPKLEGGKGDQDDLGVNCLQNNLT).

In terms of assembly, binds TNR and probably TNC. Interacts with ERBB3 and GOPC. Interacts with MDK; this interaction is independent of the presence of chondroitin sulfate chains and promotes elongation of oligodendroglial precursor-like cells. In terms of processing, N-glycosylated. Post-translationally, O-glycosylated; contains chondroitin sulfate glycans. Part-time proteoglycan, expressed in part as a proteoglycan exhibiting chondroitin sulfate glycans and in part as a non-proteoglycan form. The relative amount of both forms depends on tissues and tissue maturation. In the cerebellum the 2 forms coexist while in the cerebrum the proteoglycan form is predominant. Phosphorylated; in intracellular and extracellular parts. As to expression, expressed in olfactory bulb, hippocampus, brain stem, spinal cord, cerebrum and cerebellum. Expressed by Purkinje cells in the cerebellum (at protein level). Expressed in immature and mature cerebellum (isoform 1, isoform 2 and isoform 3).

The protein resides in the cell membrane. The protein localises to the synaptic cell membrane. Its subcellular location is the endoplasmic reticulum membrane. It is found in the golgi apparatus membrane. It localises to the cell surface. The protein resides in the secreted. May function as a growth and differentiation factor involved in neuritogenesis. May induce ERBB3 activation. In Mus musculus (Mouse), this protein is Chondroitin sulfate proteoglycan 5 (Cspg5).